Here is a 262-residue protein sequence, read N- to C-terminus: Iso-A82775C biosynthesis cluster protein B (262 aa).

Its function is as follows. Part of the gene cluster that mediates the biosynthesis of iso-A82775C, a enylepoxycyclohexane and biosynthetic precursor of the chloropestolide anticancer natural products. Within the cluster, the prenyltransferase iacE prenylates siccayne to generate pestalodiol E, using dimethylallyl diphosphate (DMAPP) as cosubstrate. The probable oxidoreductase iacF is then involved in the epoxidation of pestalodiol F to pestalodiol F, which is further converted to pestalofone A by the short-chain dehydrogenase/reductase iacG. Iso-A82775C is subsequently generated from pestalofone A by the short-chain dehydrogenase/reductase iacC. Iso-A82775C is further condensed with maldoxin via a Diels-Alder reaction to produce the anticancer natural products chloropestolides A to E. The sequence is that of Iso-A82775C biosynthesis cluster protein B from Pestalotiopsis fici (strain W106-1 / CGMCC3.15140).